Consider the following 175-residue polypeptide: Gamma-crystallin B (175 aa).

Beta/gamma crystallin 'Greek key' domains follow at residues 2–40 (GKIT…RVDS) and 41–83 (GCWM…RLIP). The interval 84-88 (QHSGT) is connecting peptide. 2 Beta/gamma crystallin 'Greek key' domains span residues 89–129 (FRMR…NVLD) and 130–172 (GCWV…RRVM).

This sequence belongs to the beta/gamma-crystallin family. In terms of assembly, monomer.

Crystallins are the dominant structural components of the vertebrate eye lens. This Canis lupus familiaris (Dog) protein is Gamma-crystallin B (CRYGB).